The primary structure comprises 478 residues: Dynein regulatory complex subunit 4 (478 aa).

A compositionally biased stretch (basic residues) spans 1 to 12 (MAPKRRGKKGKA). Residues 1–32 (MAPKRRGKKGKAKGNAVVDGVAPEDMSKEQVE) form a disordered region. The interval 1 to 114 (MAPKRRGKKG…LLYEHQNNLA (114 aa)) is regulates microtubule-binding. Coiled-coil stretches lie at residues 24 to 201 (EDMS…DELD) and 243 to 427 (NNLA…LARV). A microtubule-binding region spans residues 115 to 258 (EVKTEGTVVM…NSLKEQMEDM (144 aa)). The segment at 357–478 (QQKTGFKNLV…GPAGLVGAPT (122 aa)) is interaction with SMO.

This sequence belongs to the DRC4 family. Component of the nexin-dynein regulatory complex (N-DRC). Interacts with microtubules. Interacts with SMO. Interacts (via coiled-coil domains) with RAB3B (in GTP-bound form). Interacts with DRC1. Interacts with DRC7.

The protein resides in the cytoplasm. Its subcellular location is the cytoskeleton. The protein localises to the cell projection. It is found in the cilium. It localises to the flagellum. The protein resides in the cilium axoneme. Its subcellular location is the cilium basal body. The protein localises to the golgi apparatus. It is found in the flagellum axoneme. Functionally, component of the nexin-dynein regulatory complex (N-DRC), a key regulator of ciliary/flagellar motility which maintains the alignment and integrity of the distal axoneme and regulates microtubule sliding in motile axonemes. Plays an important role in the assembly of the N-DRC linker. Plays dual roles at both the primary (or non-motile) cilia to regulate hedgehog signaling and in motile cilia to coordinate cilia movement. Required for proper motile cilia functioning. Positively regulates ciliary smoothened (SMO)-dependent Hedgehog (Hh) signaling pathway by facilitating the trafficking of SMO into the cilium and the stimulation of SMO activity in a GRK2-dependent manner. This Rattus norvegicus (Rat) protein is Dynein regulatory complex subunit 4 (Gas8).